The sequence spans 650 residues: Chaperone protein DnaK (650 aa).

Threonine 200 bears the Phosphothreonine; by autocatalysis mark. A compositionally biased stretch (low complexity) spans glutamine 613–glutamine 634. The interval glutamine 613–aspartate 637 is disordered.

The protein belongs to the heat shock protein 70 family.

Its function is as follows. Acts as a chaperone. This is Chaperone protein DnaK from Burkholderia thailandensis (strain ATCC 700388 / DSM 13276 / CCUG 48851 / CIP 106301 / E264).